A 355-amino-acid chain; its full sequence is uncharacterized protein (355 aa).

The interval 1–61 is disordered; it reads MNKKIEKNNN…PKRRGRRPKK (61 aa). A compositionally biased stretch (polar residues) spans 18–37; it reads YESNTTDNQLIMKKNANSGS.

This is an uncharacterized protein from Acanthamoeba polyphaga mimivirus (APMV).